The following is a 291-amino-acid chain: Verruculogen synthase (291 aa).

Tyr-68 is a catalytic residue.

The protein belongs to the PhyH family. In terms of assembly, homodimer. The cofactor is Fe cation.

It catalyses the reaction fumitremorgin B + 2-oxoglutarate + AH2 + 2 O2 = verruculogen + succinate + A + CO2 + H2O. The protein operates within mycotoxin biosynthesis. Functionally, verruculogen synthase; part of the gene cluster that mediates the biosynthesis of fumitremorgins, indole alkaloids that carry not only intriguing chemical structures, but also interesting biological and pharmacological activities. The biosynthesis of fumitremorgin-type alkaloids begins by condensation of the two amino acids L-tryptophan and L-proline to brevianamide F, catalyzed by the non-ribosomal peptide synthetase ftmA. Brevianamide F is then prenylated by the prenyltransferase ftmPT1/ftmB in the presence of dimethylallyl diphosphate, resulting in the formation of tryprostatin B. The three cytochrome P450 monooxygenases, ftmP450-1/ftmC, ftmP450-2/ftmE and ftmP450-3/FtmG, are responsible for the conversion of tryprostatin B to 6-hydroxytryprostatin B, tryprostatin A to fumitremorgin C and fumitremorgin C to 12,13-dihydroxyfumitremorgin C, respectively. The putative methyltransferase ftmMT/ftmD is expected for the conversion of 6-hydroxytryprostatin B to tryprostatin A. FtmPT2/FtmH catalyzes the prenylation of 12,13-dihydroxyfumitre-morgin C in the presence of dimethylallyl diphosphate, resulting in the formation of fumitremorgin B. Fumitremorgin B is further converted to verruculogen by ftmOx1/ftmF via the insertion of an endoperoxide bond between the two prenyl moieties. In some fungal species, verruculogen is further converted to fumitremorgin A, but the enzymes involved in this step have not been identified yet. The chain is Verruculogen synthase from Aspergillus fumigatus (Neosartorya fumigata).